Reading from the N-terminus, the 493-residue chain is Probable malate:quinone oxidoreductase (493 aa).

This sequence belongs to the MQO family. FAD is required as a cofactor.

The catalysed reaction is (S)-malate + a quinone = a quinol + oxaloacetate. The protein operates within carbohydrate metabolism; tricarboxylic acid cycle; oxaloacetate from (S)-malate (quinone route): step 1/1. The protein is Probable malate:quinone oxidoreductase of Mycobacterium tuberculosis (strain ATCC 25177 / H37Ra).